A 467-amino-acid polypeptide reads, in one-letter code: ESX-4 secretion system protein eccD4 (467 aa).

The next 11 helical transmembrane spans lie at 122-142 (GALA…RNAL), 152-172 (ATAG…VIAC), 186-206 (VIAT…VPGV), 209-229 (VLVA…ITGC), 241-261 (AVVV…VPAI), 264-284 (LATL…VLLA), 319-339 (LTSL…GTAV), 344-364 (IHRS…LLLL), 374-394 (SLVF…VAAD), 401-421 (PWIA…GFVA), and 439-459 (CLAL…YSAV).

It belongs to the EccD/Snm4 family. As to quaternary structure, part of the ESX-4 / type VII secretion system (T7SS), which is composed of cytosolic and membrane components.

It localises to the cell membrane. This is ESX-4 secretion system protein eccD4 (eccD4) from Mycobacterium tuberculosis (strain CDC 1551 / Oshkosh).